The primary structure comprises 120 residues: Nascent polypeptide-associated complex protein (120 aa).

An NAC-A/B domain is found at 12-80 (GMNPAKMKQM…VKEVPKSLEI (69 aa)).

It belongs to the NAC-alpha family. As to quaternary structure, homodimer. Interacts with the ribosome. Binds ribosomal RNA.

Its function is as follows. Contacts the emerging nascent chain on the ribosome. In Methanosarcina mazei (strain ATCC BAA-159 / DSM 3647 / Goe1 / Go1 / JCM 11833 / OCM 88) (Methanosarcina frisia), this protein is Nascent polypeptide-associated complex protein.